A 1597-amino-acid polypeptide reads, in one-letter code: Pentafunctional AROM polypeptide (1597 aa).

The segment at 1 to 384 (MGVPTKISIL…HEPRASTVSN (384 aa)) is 3-dehydroquinate synthase. Residues 44-46 (DTN), 81-84 (ESSK), 114-116 (GGV), and D119 contribute to the NAD(+) site. Residue R130 coordinates 7-phospho-2-dehydro-3-deoxy-D-arabino-heptonate. 139-140 (TT) lines the NAD(+) pocket. Positions 146 and 152 each coordinate 7-phospho-2-dehydro-3-deoxy-D-arabino-heptonate. NAD(+) is bound at residue K161. Residue N162 coordinates 7-phospho-2-dehydro-3-deoxy-D-arabino-heptonate. NAD(+) is bound by residues 179 to 182 (FLNT) and N190. E194 provides a ligand contact to Zn(2+). Residues 194–197 (EVIK) and K250 each bind 7-phospho-2-dehydro-3-deoxy-D-arabino-heptonate. E260 functions as the Proton acceptor; for 3-dehydroquinate synthase activity in the catalytic mechanism. 7-phospho-2-dehydro-3-deoxy-D-arabino-heptonate contacts are provided by residues 264–268 (RNLLN) and H271. H271 lines the Zn(2+) pocket. The active-site Proton acceptor; for 3-dehydroquinate synthase activity is H275. Residues H287 and K356 each coordinate 7-phospho-2-dehydro-3-deoxy-D-arabino-heptonate. Residue H287 coordinates Zn(2+). Residues 397 to 842 (VSPGVPKNLN…WDSLAQTFKV (446 aa)) are EPSP synthase. C824 functions as the For EPSP synthase activity in the catalytic mechanism. The interval 866–1057 (ASIFIIGMRG…RSKENTFFVS (192 aa)) is shikimate kinase. 872–879 (GMRGAGKT) contacts ATP. The 3-dehydroquinase stretch occupies residues 1058 to 1278 (LTLPDLAPAA…AAPGQLSARE (221 aa)). Residue H1181 is the Proton acceptor; for 3-dehydroquinate dehydratase activity of the active site. K1209 serves as the catalytic Schiff-base intermediate with substrate; for 3-dehydroquinate dehydratase activity. The tract at residues 1291–1597 (SKKFAVIGNP…VQPKDDDIST (307 aa)) is shikimate dehydrogenase.

The protein in the N-terminal section; belongs to the sugar phosphate cyclases superfamily. Dehydroquinate synthase family. This sequence in the 2nd section; belongs to the EPSP synthase family. It in the 3rd section; belongs to the shikimate kinase family. In the 4th section; belongs to the type-I 3-dehydroquinase family. The protein in the C-terminal section; belongs to the shikimate dehydrogenase family. In terms of assembly, homodimer. Requires Zn(2+) as cofactor.

It localises to the cytoplasm. The catalysed reaction is 7-phospho-2-dehydro-3-deoxy-D-arabino-heptonate = 3-dehydroquinate + phosphate. The enzyme catalyses 3-dehydroquinate = 3-dehydroshikimate + H2O. It catalyses the reaction shikimate + NADP(+) = 3-dehydroshikimate + NADPH + H(+). It carries out the reaction shikimate + ATP = 3-phosphoshikimate + ADP + H(+). The catalysed reaction is 3-phosphoshikimate + phosphoenolpyruvate = 5-O-(1-carboxyvinyl)-3-phosphoshikimate + phosphate. It functions in the pathway metabolic intermediate biosynthesis; chorismate biosynthesis; chorismate from D-erythrose 4-phosphate and phosphoenolpyruvate: step 2/7. Its pathway is metabolic intermediate biosynthesis; chorismate biosynthesis; chorismate from D-erythrose 4-phosphate and phosphoenolpyruvate: step 3/7. It participates in metabolic intermediate biosynthesis; chorismate biosynthesis; chorismate from D-erythrose 4-phosphate and phosphoenolpyruvate: step 4/7. The protein operates within metabolic intermediate biosynthesis; chorismate biosynthesis; chorismate from D-erythrose 4-phosphate and phosphoenolpyruvate: step 5/7. It functions in the pathway metabolic intermediate biosynthesis; chorismate biosynthesis; chorismate from D-erythrose 4-phosphate and phosphoenolpyruvate: step 6/7. Functionally, the AROM polypeptide catalyzes 5 consecutive enzymatic reactions in prechorismate polyaromatic amino acid biosynthesis. This chain is Pentafunctional AROM polypeptide, found in Ajellomyces dermatitidis (strain ER-3 / ATCC MYA-2586) (Blastomyces dermatitidis).